Reading from the N-terminus, the 106-residue chain is UPF0145 protein VCM66_A0911 (106 aa).

It belongs to the UPF0145 family.

This chain is UPF0145 protein VCM66_A0911, found in Vibrio cholerae serotype O1 (strain M66-2).